Consider the following 140-residue polypeptide: 3-hydroxyacyl-[acyl-carrier-protein] dehydratase FabZ (140 aa).

H47 is a catalytic residue.

This sequence belongs to the thioester dehydratase family. FabZ subfamily.

It localises to the cytoplasm. It carries out the reaction a (3R)-hydroxyacyl-[ACP] = a (2E)-enoyl-[ACP] + H2O. In terms of biological role, involved in unsaturated fatty acids biosynthesis. Catalyzes the dehydration of short chain beta-hydroxyacyl-ACPs and long chain saturated and unsaturated beta-hydroxyacyl-ACPs. This is 3-hydroxyacyl-[acyl-carrier-protein] dehydratase FabZ from Streptococcus mutans serotype c (strain ATCC 700610 / UA159).